The sequence spans 262 residues: Small ribosomal subunit protein eS1 (262 aa).

This sequence belongs to the eukaryotic ribosomal protein eS1 family. As to quaternary structure, component of the small ribosomal subunit. Mature ribosomes consist of a small (40S) and a large (60S) subunit. The 40S subunit contains about 33 different proteins and 1 molecule of RNA (18S). The 60S subunit contains about 49 different proteins and 3 molecules of RNA (25S, 5.8S and 5S).

It is found in the cytoplasm. This is Small ribosomal subunit protein eS1 from Theileria annulata.